A 421-amino-acid polypeptide reads, in one-letter code: Signal recognition particle receptor FtsY (421 aa).

Residues 1-10 show a composition bias toward basic residues; the sequence is MFSFFRRKKK. The segment at 1–31 is disordered; the sequence is MFSFFRRKKKQETPALEEAQIQETAAKAESE. GTP contacts are provided by residues 228–235, 309–313, and 373–376; these read GINGAGKT, DTAGR, and TKLD.

It belongs to the GTP-binding SRP family. FtsY subfamily. As to quaternary structure, part of the signal recognition particle protein translocation system, which is composed of SRP and FtsY. SRP is a ribonucleoprotein composed of Ffh and a 4.5S RNA molecule.

It is found in the cell inner membrane. The protein resides in the cytoplasm. The enzyme catalyses GTP + H2O = GDP + phosphate + H(+). Functionally, involved in targeting and insertion of nascent membrane proteins into the cytoplasmic membrane. Acts as a receptor for the complex formed by the signal recognition particle (SRP) and the ribosome-nascent chain (RNC). Interaction with SRP-RNC leads to the transfer of the RNC complex to the Sec translocase for insertion into the membrane, the hydrolysis of GTP by both Ffh and FtsY, and the dissociation of the SRP-FtsY complex into the individual components. The protein is Signal recognition particle receptor FtsY of Neisseria meningitidis serogroup A / serotype 4A (strain DSM 15465 / Z2491).